The chain runs to 308 residues: Oxygen-dependent coproporphyrinogen-III oxidase (308 aa).

Residue serine 100 coordinates substrate. Residues histidine 104 and histidine 114 each contribute to the a divalent metal cation site. Histidine 114 acts as the Proton donor in catalysis. Position 116-118 (116-118) interacts with substrate; the sequence is NFR. Histidine 153 and histidine 183 together coordinate a divalent metal cation. Positions 248 to 283 are important for dimerization; that stretch reads YVEFNLVFDRGTIFGLQSGGRTESILSSMPPMATWK. 266 to 268 lines the substrate pocket; sequence GGR.

This sequence belongs to the aerobic coproporphyrinogen-III oxidase family. Homodimer. It depends on a divalent metal cation as a cofactor.

The protein localises to the cytoplasm. The catalysed reaction is coproporphyrinogen III + O2 + 2 H(+) = protoporphyrinogen IX + 2 CO2 + 2 H2O. It participates in porphyrin-containing compound metabolism; protoporphyrin-IX biosynthesis; protoporphyrinogen-IX from coproporphyrinogen-III (O2 route): step 1/1. Functionally, involved in the heme biosynthesis. Catalyzes the aerobic oxidative decarboxylation of propionate groups of rings A and B of coproporphyrinogen-III to yield the vinyl groups in protoporphyrinogen-IX. This Francisella tularensis subsp. holarctica (strain OSU18) protein is Oxygen-dependent coproporphyrinogen-III oxidase.